The chain runs to 76 residues: Conotoxin Gla(1)-TxVI (76 aa).

The signal sequence occupies residues 1–19; that stretch reads MEKLTILLLVAAVLMSTQA. Positions 20–45 are excised as a propeptide; that stretch reads LVERAGENHSKENINFLLKRKRAADR. Tryptophan 48 bears the 6'-bromotryptophan mark. Glutamate 50 carries the post-translational modification 4-carboxyglutamate. 3 disulfide bridges follow: cysteine 51/cysteine 65, cysteine 58/cysteine 69, and cysteine 64/cysteine 73. The residue at position 61 (proline 61) is a 4-hydroxyproline. 4-carboxyglutamate is present on residues glutamate 63, glutamate 67, and glutamate 70. The residue at position 76 (tryptophan 76) is a 6'-bromotryptophan.

In terms of tissue distribution, expressed by the venom duct.

The protein localises to the secreted. The chain is Conotoxin Gla(1)-TxVI from Conus textile (Cloth-of-gold cone).